The primary structure comprises 685 residues: Methionine--tRNA ligase (685 aa).

Residues 12-22 (PYANGSIHLGH) carry the 'HIGH' region motif. Cysteine 143, cysteine 146, cysteine 156, and cysteine 159 together coordinate Zn(2+). The 'KMSKS' region signature appears at 339–343 (KMSKS). Lysine 342 serves as a coordination point for ATP. The tRNA-binding domain maps to 582 to 685 (DFMKIDMRVA…TGAQPGDKVG (104 aa)).

The protein belongs to the class-I aminoacyl-tRNA synthetase family. MetG type 1 subfamily. As to quaternary structure, homodimer. Zn(2+) is required as a cofactor.

It localises to the cytoplasm. The enzyme catalyses tRNA(Met) + L-methionine + ATP = L-methionyl-tRNA(Met) + AMP + diphosphate. Its function is as follows. Is required not only for elongation of protein synthesis but also for the initiation of all mRNA translation through initiator tRNA(fMet) aminoacylation. This is Methionine--tRNA ligase from Neisseria meningitidis serogroup B (strain ATCC BAA-335 / MC58).